A 281-amino-acid polypeptide reads, in one-letter code: 3-hydroxyanthranilate 3,4-dioxygenase (281 aa).

The segment at 1–162 is domain A (catalytic); that stretch reads MAGVTAIEIP…SNEFKTGKPG (162 aa). R45 is an O2 binding site. Fe cation contacts are provided by H49, E55, and H93. E55 contacts substrate. Substrate contacts are provided by R97 and E107. Positions 163–179 are linker; the sequence is KGTFACNAPYEARWTDL. A domain B region spans residues 180 to 281; the sequence is PVPINRKEFI…GFAITIRMPG (102 aa).

This sequence belongs to the 3-HAO family. Fe(2+) serves as cofactor.

Its subcellular location is the cytoplasm. It carries out the reaction 3-hydroxyanthranilate + O2 = (2Z,4Z)-2-amino-3-carboxymuconate 6-semialdehyde. It functions in the pathway cofactor biosynthesis; NAD(+) biosynthesis; quinolinate from L-kynurenine: step 3/3. Catalyzes the oxidative ring opening of 3-hydroxyanthranilate to 2-amino-3-carboxymuconate semialdehyde, which spontaneously cyclizes to quinolinate. The polypeptide is 3-hydroxyanthranilate 3,4-dioxygenase (haao-1) (Caenorhabditis briggsae).